The sequence spans 218 residues: 3-dehydroquinate dehydratase (218 aa).

Residues 29-31 and arginine 56 each bind 3-dehydroquinate; that span reads EFR. Histidine 116 serves as the catalytic Proton donor/acceptor. Lysine 142 (schiff-base intermediate with substrate) is an active-site residue. Residues arginine 180, serine 200, and glutamine 204 each contribute to the 3-dehydroquinate site.

It belongs to the type-I 3-dehydroquinase family. Homodimer.

The catalysed reaction is 3-dehydroquinate = 3-dehydroshikimate + H2O. Its pathway is metabolic intermediate biosynthesis; chorismate biosynthesis; chorismate from D-erythrose 4-phosphate and phosphoenolpyruvate: step 3/7. Its function is as follows. Involved in the third step of the chorismate pathway, which leads to the biosynthesis of aromatic amino acids. Catalyzes the cis-dehydration of 3-dehydroquinate (DHQ) and introduces the first double bond of the aromatic ring to yield 3-dehydroshikimate. This chain is 3-dehydroquinate dehydratase, found in Methanococcus maripaludis (strain C6 / ATCC BAA-1332).